A 146-amino-acid chain; its full sequence is Large ribosomal subunit protein uL24z (146 aa).

Disordered regions lie at residues 1-26 (MKYNPRVTSSRRKNRKAHFTASSSER) and 121-146 (KAKGRAAADKEKGTKFTSEDVMQNVD). Residues 9 to 18 (SSRRKNRKAH) are compositionally biased toward basic residues. A compositionally biased stretch (basic and acidic residues) spans 121–138 (KAKGRAAADKEKGTKFTS).

This sequence belongs to the universal ribosomal protein uL24 family.

This is Large ribosomal subunit protein uL24z (RPL26A) from Arabidopsis thaliana (Mouse-ear cress).